We begin with the raw amino-acid sequence, 323 residues long: Acetyl-coenzyme A carboxylase carboxyl transferase subunit alpha (323 aa).

One can recognise a CoA carboxyltransferase C-terminal domain in the interval 40-293 (LSEKSLQLTK…RKALSDSLKT (254 aa)).

The protein belongs to the AccA family. In terms of assembly, acetyl-CoA carboxylase is a heterohexamer composed of biotin carboxyl carrier protein (AccB), biotin carboxylase (AccC) and two subunits each of ACCase subunit alpha (AccA) and ACCase subunit beta (AccD).

The protein localises to the cytoplasm. It catalyses the reaction N(6)-carboxybiotinyl-L-lysyl-[protein] + acetyl-CoA = N(6)-biotinyl-L-lysyl-[protein] + malonyl-CoA. It functions in the pathway lipid metabolism; malonyl-CoA biosynthesis; malonyl-CoA from acetyl-CoA: step 1/1. Its function is as follows. Component of the acetyl coenzyme A carboxylase (ACC) complex. First, biotin carboxylase catalyzes the carboxylation of biotin on its carrier protein (BCCP) and then the CO(2) group is transferred by the carboxyltransferase to acetyl-CoA to form malonyl-CoA. This Polynucleobacter asymbioticus (strain DSM 18221 / CIP 109841 / QLW-P1DMWA-1) (Polynucleobacter necessarius subsp. asymbioticus) protein is Acetyl-coenzyme A carboxylase carboxyl transferase subunit alpha.